We begin with the raw amino-acid sequence, 217 residues long: MQVSQYLYQNAQSIWGDCISHPFVQGIGRGTLERDKFRFYIIQDYLFLLEYAKVFALGVVKACDEAVMREFSNAIQDILNNEMSIHNHYIRELQITQKELQNACPTLANKSYTSYMLAEGFKGSIKEVAAAVLSCGWSYLVIAQNLSQIPNALEHAFYGHWIKGYSSKEFQACVNWNINLLDSLTLASSKQEIEKLKEIFITTSEYEYLFWDMAYQS.

D44 contributes to the substrate binding site. C135 functions as the Nucleophile in the catalytic mechanism. Substrate contacts are provided by Y139 and Y165. E207 acts as the Proton donor in catalysis.

It belongs to the TenA family. In terms of assembly, homotetramer.

The enzyme catalyses 4-amino-5-aminomethyl-2-methylpyrimidine + H2O = 4-amino-5-hydroxymethyl-2-methylpyrimidine + NH4(+). It functions in the pathway cofactor biosynthesis; thiamine diphosphate biosynthesis. In terms of biological role, catalyzes an amino-pyrimidine hydrolysis reaction at the C5' of the pyrimidine moiety of thiamine compounds to give a hydroxymethylpyrimidine (HMP). Displays low activity on 4-amino-5-aminomethyl-2-methylpyrimidine as substrate, indicating that the enzyme may act on a different HMP precursor that may derive from the human stomach food assumption or processing. Is probably involved in thiamine biosynthesis. Does not display thiaminase II activity, as it is unable to hydrolyze thiamine. In Helicobacter pylori (Campylobacter pylori), this protein is Aminopyrimidine aminohydrolase.